Here is a 236-residue protein sequence, read N- to C-terminus: MSIHIAAQQGEIADKILLPGDPLRAKFIAENFLGDAVCFNEVRNMFGYTGTYKGHRVSVMGTGMGMPSISIYARELIVDYGVKKLIRVGTAGSLNEEVHVRELVLAQAAATNSNIVRNDWPQYDFPQIASFDLLDKAYHIAKELGMTTHVGNVLSSDVFYSNYFEKNIELGKWGVKAVEMEAAALYYLAAQYHVDALAIMTISDSLVNPDEDTTAEERQNTFTDMMKVGLETLIAE.

Residue histidine 4 participates in a purine D-ribonucleoside binding. Residues glycine 20, arginine 24, arginine 43, and 87–90 (RVGT) contribute to the phosphate site. A purine D-ribonucleoside contacts are provided by residues 179–181 (EME) and 203–204 (SD). The Proton donor role is filled by aspartate 204.

The protein belongs to the PNP/UDP phosphorylase family. As to quaternary structure, homohexamer; trimer of homodimers.

The enzyme catalyses a purine D-ribonucleoside + phosphate = a purine nucleobase + alpha-D-ribose 1-phosphate. The catalysed reaction is a purine 2'-deoxy-D-ribonucleoside + phosphate = a purine nucleobase + 2-deoxy-alpha-D-ribose 1-phosphate. In terms of biological role, catalyzes the reversible phosphorolytic breakdown of the N-glycosidic bond in the beta-(deoxy)ribonucleoside molecules, with the formation of the corresponding free purine bases and pentose-1-phosphate. This chain is Purine nucleoside phosphorylase DeoD-type, found in Streptococcus pneumoniae serotype 2 (strain D39 / NCTC 7466).